Consider the following 620-residue polypeptide: Chaperone protein HtpG (620 aa).

Positions 1 to 334 (MTTTDTAPQS…SEDLPLNLSR (334 aa)) are a; substrate-binding. The b stretch occupies residues 335–548 (EMLQNNPQLA…GLGPDRALER (214 aa)). The interval 549–620 (MLAQQNRGAA…RLNRLVLRAL (72 aa)) is c.

Belongs to the heat shock protein 90 family. In terms of assembly, homodimer.

It localises to the cytoplasm. Its function is as follows. Molecular chaperone. Has ATPase activity. This chain is Chaperone protein HtpG, found in Rhodopseudomonas palustris (strain BisB18).